The primary structure comprises 275 residues: MAIVKVKPTSPGRRAMVKVVNKDLHKGKPHAALLDTQSSKAGRNNNGRITTRHQGGGHKQHYRVIDFRRTKDGIPAKVERLEYDPNRSANIALVLYADGERRYIIAPKGVTVGQQLMSGSEAPIRAGNTLPIRNIPVGTTIHCIEMLPGKGAQMARSAGTSAMLLAREGLYAQVRLRSGEIRRVHIECRATIGEVGNEEHSLRQIGKAGANRWRGIRPTVRGVAMNPIDHPHGGGEGRTAAGRDPVSPWGTPTKGFRTRRNKRTTTMIVQRRHKR.

Positions 38–53 (SSKAGRNNNGRITTRH) are enriched in polar residues. 2 disordered regions span residues 38–60 (SSKA…GHKQ) and 224–257 (AMNP…KGFR).

Belongs to the universal ribosomal protein uL2 family. In terms of assembly, part of the 50S ribosomal subunit. Forms a bridge to the 30S subunit in the 70S ribosome.

Functionally, one of the primary rRNA binding proteins. Required for association of the 30S and 50S subunits to form the 70S ribosome, for tRNA binding and peptide bond formation. It has been suggested to have peptidyltransferase activity; this is somewhat controversial. Makes several contacts with the 16S rRNA in the 70S ribosome. This is Large ribosomal subunit protein uL2 from Burkholderia pseudomallei (strain 1106a).